A 329-amino-acid polypeptide reads, in one-letter code: Phenylalanine--tRNA ligase alpha subunit (329 aa).

Residue Glu254 coordinates Mg(2+).

This sequence belongs to the class-II aminoacyl-tRNA synthetase family. Phe-tRNA synthetase alpha subunit type 1 subfamily. As to quaternary structure, tetramer of two alpha and two beta subunits. It depends on Mg(2+) as a cofactor.

The protein localises to the cytoplasm. The enzyme catalyses tRNA(Phe) + L-phenylalanine + ATP = L-phenylalanyl-tRNA(Phe) + AMP + diphosphate + H(+). The chain is Phenylalanine--tRNA ligase alpha subunit from Haemophilus influenzae (strain PittEE).